The following is a 425-amino-acid chain: L-lysine N6-monooxygenase (425 aa).

8 to 14 (IGVGTGP) provides a ligand contact to FAD.

Belongs to the lysine N(6)-hydroxylase/L-ornithine N(5)-oxygenase family. FAD is required as a cofactor.

Its subcellular location is the cytoplasm. It is found in the cell membrane. The enzyme catalyses L-lysine + NADPH + O2 = N(6)-hydroxy-L-lysine + NADP(+) + H2O. The protein operates within siderophore biosynthesis; aerobactin biosynthesis. Flavoprotein monooxygenase required for N-hydroxylation of lysine. Involved in the biosynthesis of the siderophore aerobactin which is a chelator that mediates the high-affinity iron transport systems induced by the organism under iron-stressed conditions. The polypeptide is L-lysine N6-monooxygenase (Escherichia coli).